The chain runs to 294 residues: GDP-6-deoxy-D-talose 4-dehydrogenase (294 aa).

NAD(+)-binding positions include 11–12 (FI), 38–39 (DL), 60–64 (LAALT), threonine 104, tyrosine 128, lysine 132, and phenylalanine 154. Positions 104 and 128 each coordinate substrate. Tyrosine 128 acts as the Proton acceptor in catalysis. Positions 155 and 190 each coordinate substrate.

Belongs to the NAD(P)-dependent epimerase/dehydratase family.

It catalyses the reaction GDP-6-deoxy-alpha-D-talose + NAD(+) = GDP-4-dehydro-alpha-D-rhamnose + NADH + H(+). It carries out the reaction GDP-6-deoxy-alpha-D-talose + NADP(+) = GDP-4-dehydro-alpha-D-rhamnose + NADPH + H(+). The protein operates within bacterial outer membrane biogenesis; LPS O-antigen biosynthesis. Its function is as follows. Catalyzes the conversion of GDP-4-dehydro-6-deoxy-D-mannose to GDP-6-deoxy-D-talose. The protein is GDP-6-deoxy-D-talose 4-dehydrogenase (tld) of Aggregatibacter actinomycetemcomitans (Actinobacillus actinomycetemcomitans).